A 410-amino-acid polypeptide reads, in one-letter code: Multifunctional CCA protein (410 aa).

Residues G8 and R11 each coordinate ATP. Positions 8 and 11 each coordinate CTP. Positions 21 and 23 each coordinate Mg(2+). Residues R91, R137, and R140 each contribute to the ATP site. The CTP site is built by R91, R137, and R140. The HD domain occupies 225-326 (SGIHTLMTLQ…LNVLKKTDAF (102 aa)).

This sequence belongs to the tRNA nucleotidyltransferase/poly(A) polymerase family. Bacterial CCA-adding enzyme type 1 subfamily. As to quaternary structure, monomer. Can also form homodimers and oligomers. Mg(2+) serves as cofactor. Requires Ni(2+) as cofactor.

It carries out the reaction a tRNA precursor + 2 CTP + ATP = a tRNA with a 3' CCA end + 3 diphosphate. The catalysed reaction is a tRNA with a 3' CCA end + 2 CTP + ATP = a tRNA with a 3' CCACCA end + 3 diphosphate. Catalyzes the addition and repair of the essential 3'-terminal CCA sequence in tRNAs without using a nucleic acid template. Adds these three nucleotides in the order of C, C, and A to the tRNA nucleotide-73, using CTP and ATP as substrates and producing inorganic pyrophosphate. tRNA 3'-terminal CCA addition is required both for tRNA processing and repair. Also involved in tRNA surveillance by mediating tandem CCA addition to generate a CCACCA at the 3' terminus of unstable tRNAs. While stable tRNAs receive only 3'-terminal CCA, unstable tRNAs are marked with CCACCA and rapidly degraded. This Neisseria gonorrhoeae (strain ATCC 700825 / FA 1090) protein is Multifunctional CCA protein.